We begin with the raw amino-acid sequence, 276 residues long: Small ribosomal subunit protein uS3 (276 aa).

The 70-residue stretch at Val-17–Gly-86 folds into the KH type-2 domain. The disordered stretch occupies residues Phe-193–Arg-276. Low complexity predominate over residues Glu-214 to Gln-227. Basic and acidic residues-rich tracts occupy residues Ala-228–Asp-240 and Pro-258–Arg-276.

The protein belongs to the universal ribosomal protein uS3 family. In terms of assembly, part of the 30S ribosomal subunit.

In terms of biological role, binds the lower part of the 30S subunit head. This chain is Small ribosomal subunit protein uS3, found in Methanothrix thermoacetophila (strain DSM 6194 / JCM 14653 / NBRC 101360 / PT) (Methanosaeta thermophila).